The following is a 321-amino-acid chain: L-carnitine dehydrogenase (321 aa).

14-19 contacts NAD(+); that stretch reads GSGVIG.

The protein belongs to the 3-hydroxyacyl-CoA dehydrogenase family. L-carnitine dehydrogenase subfamily. As to quaternary structure, homodimer.

The protein resides in the cytoplasm. It catalyses the reaction carnitine + NAD(+) = 3-dehydrocarnitine + NADH + H(+). The protein operates within amine and polyamine metabolism; carnitine metabolism. Its activity is regulated as follows. Analogs of L-carnitine such as D-carnitine, glycine betaine and choline, are competitive inhibitors of L-carnitine oxidation. Catalyzes the NAD(+)-dependent oxidation of L-carnitine to 3-dehydrocarnitine. Is specific for L-carnitine and NAD(+) as substrates. D,L-3-hydroxybutyrate, L-lactate, ethanol, L-malate and D,L-isocitrate are not substrates. Is involved in a L-carnitine degradation pathway that allows P.aeruginosa to grow on L-carnitine as the sole source of carbon and nitrogen. The sequence is that of L-carnitine dehydrogenase from Pseudomonas aeruginosa (strain ATCC 15692 / DSM 22644 / CIP 104116 / JCM 14847 / LMG 12228 / 1C / PRS 101 / PAO1).